The chain runs to 52 residues: Conotoxin Cal9.2b (52 aa).

A propeptide spanning residues K1–L6 is cleaved from the precursor. Cystine bridges form between C14-C31, C19-C41, and C21-C46.

Expressed by the venom duct.

The protein resides in the secreted. Functionally, probable neurotoxin with unknown target. Possibly targets ion channels. The chain is Conotoxin Cal9.2b from Californiconus californicus (California cone).